Here is a 362-residue protein sequence, read N- to C-terminus: Caveolae-associated protein 4 (362 aa).

The segment at 1-24 is disordered; the sequence is MEHNGSASNAGKIHQNRLSSVTED. Residues 100–120 are a coiled coil; that stretch reads IKDVKARVEKQQVRVTKVETK. A phosphoserine mark is found at S152, S171, and S172. The segment covering 227–255 has biased composition (basic and acidic residues); it reads PERRERLRQSGERLRQSGERLRQSGERFK. The disordered stretch occupies residues 227–261; it reads PERRERLRQSGERLRQSGERLRQSGERFKKSISNA. Y324 is modified (phosphotyrosine). T334 is modified (phosphothreonine). S353 bears the Phosphoserine mark.

The protein belongs to the CAVIN family. As to quaternary structure, component of the CAVIN complex composed of CAVIN1, CAVIN2, CAVIN3 and CAVIN4. Interacts with CAVIN1, CAV3, ADRA1A and ADRA1B. Interacts with CAVIN2; this augments the transactivation of NPPA. Interacts with MAPK1 and MAPK3. In terms of tissue distribution, expressed at much higher levels in cardiomyocytes than in non-cardiomyocytes.

Its subcellular location is the cytoplasm. The protein resides in the myofibril. It localises to the sarcomere. It is found in the cytosol. The protein localises to the cell membrane. Its subcellular location is the sarcolemma. The protein resides in the membrane. It localises to the caveola. Modulates the morphology of formed caveolae in cardiomyocytes, but is not required for caveolar formation. Facilitates the recruitment of MAPK1/3 to caveolae within cardiomyocytes and regulates alpha-1 adrenergic receptor-induced hypertrophic responses in cardiomyocytes through MAPK1/3 activation. Contributes to proper membrane localization and stabilization of caveolin-3 (CAV3) in cardiomyocytes. Induces RHOA activation and activates NPPA transcription and myofibrillar organization through the Rho/ROCK signaling pathway. The protein is Caveolae-associated protein 4 of Rattus norvegicus (Rat).